A 92-amino-acid polypeptide reads, in one-letter code: Small ribosomal subunit protein bS20 (92 aa).

The segment covering 1–21 has biased composition (basic and acidic residues); the sequence is MPLHKSAEKRLRQAARRNERN. 2 disordered regions span residues 1-26 and 73-92; these read MPLH…ARKK and ASRK…PTAS. Residues 82–92 show a composition bias toward polar residues; that stretch reads KALNNYTPTAS.

It belongs to the bacterial ribosomal protein bS20 family.

Its function is as follows. Binds directly to 16S ribosomal RNA. This is Small ribosomal subunit protein bS20 from Chlorobaculum tepidum (strain ATCC 49652 / DSM 12025 / NBRC 103806 / TLS) (Chlorobium tepidum).